The primary structure comprises 138 residues: Cyclin-dependent kinase 4 inhibitor B (138 aa).

Residues 13 to 39 (GSDEGLASAAARGLVEKVRQLLEAGAD) form an ANK 1; truncated repeat. ANK repeat units lie at residues 46-74 (FGRR…EPNC), 79-108 (TLTR…RLDV), and 112-138 (WGRL…ATGD).

It belongs to the CDKN2 cyclin-dependent kinase inhibitor family. Heterodimer of CDKN2B with CDK4 or CDK6. Isoform 2 does not interact with CDK4 nor CDK6. In terms of tissue distribution, isoform 2 is expressed in normal (keratinocytes, fibroblasts) and tumor cell lines.

The protein localises to the cytoplasm. Interacts strongly with CDK4 and CDK6. Potent inhibitor. Potential effector of TGF-beta induced cell cycle arrest. This chain is Cyclin-dependent kinase 4 inhibitor B (CDKN2B), found in Homo sapiens (Human).